The chain runs to 603 residues: Probable NOT transcription complex subunit VIP2 (603 aa).

Polar residues-rich tracts occupy residues 1–28 (MQGTLTSRNTAINNVPSSGVQQSGNNLS) and 36–70 (NLPSALSQIPQGNSHGHSGMTSRGGTSVVGNPGYS). 4 disordered regions span residues 1–70 (MQGT…PGYS), 212–242 (NDGSPFDINDFPQLSSRPSSAGGPQGQLGSL), 306–335 (AGFNLGGTYSSNRPQQQLQHAPSVSSGGVS), and 355–377 (SSHSSYQQQGGGPPGIGLRPLNS). Residues 312 to 335 (GTYSSNRPQQQLQHAPSVSSGGVS) show a composition bias toward polar residues.

Belongs to the CNOT2/3/5 family. Binds to VIP1. Interacts with Agrobacterium tumefaciens VirE2. Forms a complex made of Agrobacterium VirE2, VIP1, VIP2 and single-stranded DNA (ssDNA).

It localises to the nucleus. In terms of biological role, transcriptional regulator required for Agrobacterium-mediated stable genetic transformation by T-DNA integration in host genome, but not for T-DNA transient expression. The polypeptide is Probable NOT transcription complex subunit VIP2 (VIP2) (Nicotiana benthamiana).